The sequence spans 273 residues: Probable glycerophosphodiester phosphodiesterase GpdQ (273 aa).

Residues aspartate 8, histidine 10, aspartate 50, asparagine 80, histidine 154, histidine 194, and histidine 196 each contribute to the Fe cation site.

Belongs to the cyclic nucleotide phosphodiesterase class-III family. The cofactor is Fe(2+).

The enzyme catalyses a sn-glycero-3-phosphodiester + H2O = an alcohol + sn-glycerol 3-phosphate + H(+). The catalysed reaction is sn-glycero-3-phosphoethanolamine + H2O = ethanolamine + sn-glycerol 3-phosphate + H(+). Functionally, catalyzes the hydrolysis of the 3'-5' phosphodiester bond of glycerophosphodiesters such as glycerophosphorylethanolamine (GPE), a typical phospholipid metabolite. This is Probable glycerophosphodiester phosphodiesterase GpdQ from Arcobacter nitrofigilis (strain ATCC 33309 / DSM 7299 / CCUG 15893 / LMG 7604 / NCTC 12251 / CI) (Campylobacter nitrofigilis).